We begin with the raw amino-acid sequence, 102 residues long: Small ribosomal subunit protein uS10 (102 aa).

This sequence belongs to the universal ribosomal protein uS10 family. As to quaternary structure, part of the 30S ribosomal subunit.

Involved in the binding of tRNA to the ribosomes. This is Small ribosomal subunit protein uS10 from Malacoplasma penetrans (strain HF-2) (Mycoplasma penetrans).